The chain runs to 484 residues: Mitogen-activated protein kinase SLT2/MPK1 (484 aa).

Positions 23–318 (FQLIKEIGHG…VDEALEHPYL (296 aa)) constitute a Protein kinase domain. Residues 29–37 (IGHGAYGIV) and K54 each bind ATP. D153 functions as the Proton acceptor in the catalytic mechanism. T190 bears the Phosphothreonine mark. The TXY motif lies at 190–192 (TEY). Y192 carries the post-translational modification Phosphotyrosine. Positions 383–392 (QQQQQQQQQP) are enriched in low complexity. 2 disordered regions span residues 383–403 (QQQQ…AAAS) and 426–464 (IHSQ…PQND).

Belongs to the protein kinase superfamily. CMGC Ser/Thr protein kinase family. MAP kinase subfamily. As to quaternary structure, interacts with RLM1. Requires Mg(2+) as cofactor. Post-translationally, dually phosphorylated on Thr-190 and Tyr-192, which activates the enzyme.

The enzyme catalyses L-seryl-[protein] + ATP = O-phospho-L-seryl-[protein] + ADP + H(+). The catalysed reaction is L-threonyl-[protein] + ATP = O-phospho-L-threonyl-[protein] + ADP + H(+). With respect to regulation, activated by tyrosine and threonine phosphorylation by MKK1 and MKK2. In terms of biological role, serine/threonine protein kinase involved in a signal transduction pathway that plays a role in yeast cell morphogenesis and cell growth. This pathway seems to start by SMP3; then involve the kinase PKC1 that may act the BCK1 kinase that then phosphorylates MKK1 and MKK2 which themselves phosphorylate the SLT2/MPK1 kinase which itself then phosphorylates and activates the transcription factor RLM1. Directly phosphorylates BCY1 upon TOR complex 1 (TORC1) inhibition. This chain is Mitogen-activated protein kinase SLT2/MPK1 (SLT2), found in Saccharomyces cerevisiae (strain ATCC 204508 / S288c) (Baker's yeast).